Consider the following 165-residue polypeptide: Protein SprT (165 aa).

A SprT-like domain is found at 22–163; that stretch reads LAQANLKLGR…RCVHCGEQLT (142 aa). His78 serves as a coordination point for Zn(2+). The active site involves Glu79. His82 contributes to the Zn(2+) binding site.

Belongs to the SprT family. The cofactor is Zn(2+).

It is found in the cytoplasm. This chain is Protein SprT, found in Escherichia fergusonii (strain ATCC 35469 / DSM 13698 / CCUG 18766 / IAM 14443 / JCM 21226 / LMG 7866 / NBRC 102419 / NCTC 12128 / CDC 0568-73).